The primary structure comprises 138 residues: Putative pre-16S rRNA nuclease (138 aa).

The protein belongs to the YqgF nuclease family.

It localises to the cytoplasm. Functionally, could be a nuclease involved in processing of the 5'-end of pre-16S rRNA. The protein is Putative pre-16S rRNA nuclease of Escherichia coli O45:K1 (strain S88 / ExPEC).